A 465-amino-acid polypeptide reads, in one-letter code: MIGAGLAGSEAAWQLAEAGVDVVLHEMRPDRMTEAHRTATPAELVCSNSFRSDDAANNAVGLLHAEMRRLGSLIMRAADANQVPAGGALAVDREGFSAAVATALNGHPRIELRRGEITGLPPSDWDNVIIATGPLTSQPLAEAIRDLTDETALAFFDAIAPIVHRDTIDMSKAWFQSRYDKVGPGGTGADYINCPMTKDQYDTFVAALLAGEKTDFKDWETNTPYFDGCLPIEVMAERGHETLRHGPMKPVGLTNPHNPTVKPHAIVQLRQDNKLGTLYNMVGFQTKLKYGPQQQIFRTIPGLENAEFARLGGLHRNTFLNSPKLLDAQLRLRAQPRLRFAGQMTGCEGYVESASIGLIAGLYAAAEARGTGLSPPPATTALGALLGHITGGHIETIDGATRSFQPMNINFGLFPPLAVAPTRKPDGSRLKGNEKTVAKKQALSARALADLDGWIAEHLRVAAAA.

Residue 3-8 coordinates FAD; sequence GAGLAG.

Belongs to the MnmG family. TrmFO subfamily. The cofactor is FAD.

The protein resides in the cytoplasm. It carries out the reaction uridine(54) in tRNA + (6R)-5,10-methylene-5,6,7,8-tetrahydrofolate + NADH + H(+) = 5-methyluridine(54) in tRNA + (6S)-5,6,7,8-tetrahydrofolate + NAD(+). The catalysed reaction is uridine(54) in tRNA + (6R)-5,10-methylene-5,6,7,8-tetrahydrofolate + NADPH + H(+) = 5-methyluridine(54) in tRNA + (6S)-5,6,7,8-tetrahydrofolate + NADP(+). In terms of biological role, catalyzes the folate-dependent formation of 5-methyl-uridine at position 54 (M-5-U54) in all tRNAs. The polypeptide is Methylenetetrahydrofolate--tRNA-(uracil-5-)-methyltransferase TrmFO (Bradyrhizobium sp. (strain BTAi1 / ATCC BAA-1182)).